The primary structure comprises 710 residues: Methionine--tRNA ligase (710 aa).

The 'HIGH' region signature appears at P26–H36. 4 residues coordinate Zn(2+): C157, C160, C170, and C173. A 'KMSKS' region motif is present at residues K347–S351. K350 contacts ATP. The tRNA-binding domain maps to D604–K710.

This sequence belongs to the class-I aminoacyl-tRNA synthetase family. MetG type 1 subfamily. Homodimer. Requires Zn(2+) as cofactor.

The protein localises to the cytoplasm. It catalyses the reaction tRNA(Met) + L-methionine + ATP = L-methionyl-tRNA(Met) + AMP + diphosphate. In terms of biological role, is required not only for elongation of protein synthesis but also for the initiation of all mRNA translation through initiator tRNA(fMet) aminoacylation. This Paraburkholderia xenovorans (strain LB400) protein is Methionine--tRNA ligase.